A 154-amino-acid chain; its full sequence is Spermatogenesis-associated protein 19, mitochondrial (154 aa).

A mitochondrion-targeting transit peptide spans 1 to 24 (MIITTWIMYIFARKTVGLPFPPRV). Phosphoserine occurs at positions 26 and 116.

In terms of tissue distribution, expressed specifically in adult testis (at protein level).

Its subcellular location is the mitochondrion outer membrane. It localises to the mitochondrion. The protein resides in the cell projection. The protein localises to the cilium. It is found in the flagellum. Its function is as follows. Essential for sperm motility and male fertility. Plays an important role in sperm motility by regulating the organization and function of the mitochondria and is also required for correct sperm midpiece assembly. This Mus musculus (Mouse) protein is Spermatogenesis-associated protein 19, mitochondrial (Spata19).